The primary structure comprises 230 residues: Flagellar L-ring protein (230 aa).

Residues 1 to 15 (MSRLPSLSRPCLAIA) form the signal peptide. The N-palmitoyl cysteine moiety is linked to residue C16. C16 carries the S-diacylglycerol cysteine lipid modification.

The protein belongs to the FlgH family. In terms of assembly, the basal body constitutes a major portion of the flagellar organelle and consists of four rings (L,P,S, and M) mounted on a central rod.

It is found in the cell outer membrane. The protein localises to the bacterial flagellum basal body. Assembles around the rod to form the L-ring and probably protects the motor/basal body from shearing forces during rotation. The polypeptide is Flagellar L-ring protein (Xanthomonas axonopodis pv. citri (strain 306)).